Consider the following 436-residue polypeptide: Na(+)/H(+) antiporter NhaA 2 (436 aa).

11 helical membrane-spanning segments follow: residues 35–55, 80–100, 116–136, 147–167, 176–196, 201–221, 226–246, 283–303, 313–333, 354–374, and 385–405; these read FGGGLLLLGAVLALLWANSPW, LATWAADGLLAIFFFVVGLEL, ALPVVAAIGGMIVPALIYVGI, GWAIPTATDIAFALAVLAVIG, AFLLTLAVVDDLLAITVIAIF, FKLTPLLVALLPIALFGLLVQ, WWWALIPLAVVAWTLVHESGV, VSAGFAVPVFAFFAAGVSLRG, PIVVGIVAGLVLGKVLGIFGS, LLGVSLLAGIGFTVSLLIGEL, and VKAAVLTGSVIAALLASAVLS.

It belongs to the NhaA Na(+)/H(+) (TC 2.A.33) antiporter family.

It localises to the cell membrane. The enzyme catalyses Na(+)(in) + 2 H(+)(out) = Na(+)(out) + 2 H(+)(in). Its function is as follows. Na(+)/H(+) antiporter that extrudes sodium in exchange for external protons. This is Na(+)/H(+) antiporter NhaA 2 from Salinispora arenicola (strain CNS-205).